Consider the following 243-residue polypeptide: LexA repressor (243 aa).

The interval 1 to 30 (MSDDTGEFTDGSTESPADADGAGRRRAVDN) is disordered. Residues 21–30 (GAGRRRAVDN) show a composition bias toward basic and acidic residues. The H-T-H motif DNA-binding region spans 56–76 (IREIGDAVGLTSTSSVAHQLR). Residues Ser-167 and Lys-204 each act as for autocatalytic cleavage activity in the active site.

The protein belongs to the peptidase S24 family. In terms of assembly, homodimer.

It catalyses the reaction Hydrolysis of Ala-|-Gly bond in repressor LexA.. Its function is as follows. Represses a number of genes involved in the response to DNA damage (SOS response), including recA and lexA. In the presence of single-stranded DNA, RecA interacts with LexA causing an autocatalytic cleavage which disrupts the DNA-binding part of LexA, leading to derepression of the SOS regulon and eventually DNA repair. This chain is LexA repressor, found in Mycolicibacterium smegmatis (strain ATCC 700084 / mc(2)155) (Mycobacterium smegmatis).